A 149-amino-acid chain; its full sequence is Urease accessory protein UreE (149 aa).

It belongs to the UreE family.

The protein resides in the cytoplasm. Functionally, involved in urease metallocenter assembly. Binds nickel. Probably functions as a nickel donor during metallocenter assembly. In Prochlorococcus marinus (strain MIT 9215), this protein is Urease accessory protein UreE.